We begin with the raw amino-acid sequence, 494 residues long: Glutamate--tRNA ligase (494 aa).

The 'HIGH' region signature appears at 9–19 (PSPTGPLHIGS). The short motif at 249–253 (KLSKR) is the 'KMSKS' region element. Lysine 252 is an ATP binding site.

This sequence belongs to the class-I aminoacyl-tRNA synthetase family. Glutamate--tRNA ligase type 1 subfamily. Monomer.

It is found in the cytoplasm. It catalyses the reaction tRNA(Glu) + L-glutamate + ATP = L-glutamyl-tRNA(Glu) + AMP + diphosphate. Its function is as follows. Catalyzes the attachment of glutamate to tRNA(Glu) in a two-step reaction: glutamate is first activated by ATP to form Glu-AMP and then transferred to the acceptor end of tRNA(Glu). The polypeptide is Glutamate--tRNA ligase (Azobacteroides pseudotrichonymphae genomovar. CFP2).